The primary structure comprises 305 residues: Ornithine carbamoyltransferase (305 aa).

Carbamoyl phosphate contacts are provided by residues 48-51, Arg-99, and 126-129; these read STRT and HPCQ. L-ornithine contacts are provided by residues Asn-157, Asp-222, and 226-227; that span reads SM. Carbamoyl phosphate-binding positions include 262 to 263 and Arg-290; that span reads CL.

Belongs to the aspartate/ornithine carbamoyltransferase superfamily. OTCase family.

It is found in the cytoplasm. The catalysed reaction is carbamoyl phosphate + L-ornithine = L-citrulline + phosphate + H(+). The protein operates within amino-acid biosynthesis; L-arginine biosynthesis; L-arginine from L-ornithine and carbamoyl phosphate: step 1/3. Its function is as follows. Reversibly catalyzes the transfer of the carbamoyl group from carbamoyl phosphate (CP) to the N(epsilon) atom of ornithine (ORN) to produce L-citrulline. In Methanocaldococcus jannaschii (strain ATCC 43067 / DSM 2661 / JAL-1 / JCM 10045 / NBRC 100440) (Methanococcus jannaschii), this protein is Ornithine carbamoyltransferase (argF).